We begin with the raw amino-acid sequence, 65 residues long: uncharacterized protein (65 aa).

This is an uncharacterized protein from Vaccinia virus (strain Copenhagen) (VACV).